Reading from the N-terminus, the 206-residue chain is 2,3-bisphosphoglycerate-dependent phosphoglycerate mutase (206 aa).

Substrate is bound by residues 9–16 (RHGQSEWN), 22–23 (TG), Arg-61, 88–91 (ERDY), Lys-99, 115–116 (RR), and 159–160 (GN). The Tele-phosphohistidine intermediate role is filled by His-10. Glu-88 functions as the Proton donor/acceptor in the catalytic mechanism.

It belongs to the phosphoglycerate mutase family. BPG-dependent PGAM subfamily. As to quaternary structure, homodimer.

The catalysed reaction is (2R)-2-phosphoglycerate = (2R)-3-phosphoglycerate. It participates in carbohydrate degradation; glycolysis; pyruvate from D-glyceraldehyde 3-phosphate: step 3/5. Its function is as follows. Catalyzes the interconversion of 2-phosphoglycerate and 3-phosphoglycerate. This chain is 2,3-bisphosphoglycerate-dependent phosphoglycerate mutase, found in Bartonella bacilliformis (strain ATCC 35685 / KC583 / Herrer 020/F12,63).